The sequence spans 308 residues: F420-non-reducing hydrogenase subunit G (308 aa).

It belongs to the [NiFe]/[NiFeSe] hydrogenase small subunit family. In terms of assembly, the F420-non-reducing hydrogenase is composed of three subunits; MvhA, MvhD and MvhG. It forms a complex with the heterodisulfide reductase (hdr).

Part of a complex that provides reducing equivalents for heterodisulfide reductase. The polypeptide is F420-non-reducing hydrogenase subunit G (mvhG) (Methanothermobacter marburgensis (strain ATCC BAA-927 / DSM 2133 / JCM 14651 / NBRC 100331 / OCM 82 / Marburg) (Methanobacterium thermoautotrophicum)).